Here is a 258-residue protein sequence, read N- to C-terminus: Enterotoxin type D (258 aa).

The first 25 residues, 1–25 (MKKFNILIALLFFTSLVISPLNVKA), serve as a signal peptide directing secretion. Zn(2+) contacts are provided by aspartate 212, histidine 248, histidine 250, and aspartate 252.

It belongs to the staphylococcal/streptococcal toxin family. In terms of assembly, homodimer; zinc-dependent. Interacts with MHC class II molecules composed of alpha/HLA-DRA and beta/HLA-DRB1 chains. The cofactor is Zn(2+).

It is found in the secreted. Staphylococcal enterotoxin that activates the host immune system by binding as unprocessed molecules to major histocompatibility (MHC) complex class II and T-cell receptor (TCR) molecules. In turn, this ternary complex activates a large number of T-lymphocytes initiating a systemic release of pro-inflammatory cytokines. In addition, induces B-cell proliferation and differentiation in the presence of T-cells. Causes also the intoxication staphylococcal food poisoning syndrome. This Staphylococcus aureus protein is Enterotoxin type D (entD).